Here is a 307-residue protein sequence, read N- to C-terminus: N-acetylglucosamine-1-phosphotransferase subunit gamma (307 aa).

The first 24 residues, 1-24, serve as a signal peptide directing secretion; it reads MAGRLAGFLMLLGLASQGPAPAYA. The MRH domain occupies 69–171; the sequence is GKCFSLVEST…TFETPLVCHP (103 aa). The cysteines at positions 71 and 84 are disulfide-linked. N-linked (GlcNAc...) asparagine glycosylation is found at Asn88 and Asn115. Intrachain disulfides connect Cys129-Cys157 and Cys142-Cys169. One can recognise a DMAP1-binding domain in the interval 176–279; it reads VYPTLSEALQ…HTQPTETTHS (104 aa).

As to quaternary structure, homodimer; disulfide-linked. Hexamer of two alpha (GNPTAB), two beta (GNPTAB) and two gamma (GNPTG) subunits; disulfide-linked. The alpha and/or the beta subunits of the enzyme constitute the catalytic subunits. Cys-245 mediates the formation of the interchain disulfide bond for formation of the homodimer. Cys-142, Cys-157 and Cys-169 are involved in intramolecular disulfide bonds formation. Widely expressed. Highly expressed in the liver, intestine, brain, thymus, testis and ovary.

Its subcellular location is the secreted. It localises to the golgi apparatus. Its function is as follows. Non-catalytic subunit of the N-acetylglucosamine-1-phosphotransferase complex, an enzyme that catalyzes the formation of mannose 6-phosphate (M6P) markers on high mannose type oligosaccharides in the Golgi apparatus. Binds and presents the high mannose glycans of the acceptor to the catalytic alpha and beta subunits (GNPTAB). Enhances the rate of N-acetylglucosamine-1-phosphate transfer to the oligosaccharides of acid hydrolase acceptors. The polypeptide is N-acetylglucosamine-1-phosphotransferase subunit gamma (Gnptg) (Mus musculus (Mouse)).